Consider the following 532-residue polypeptide: CTP synthase (532 aa).

The segment at 1-267 is amidoligase domain; that stretch reads MTKYIFVTGG…DDIVLEHLQL (267 aa). Ser-13 is a binding site for CTP. Ser-13 contributes to the UTP binding site. Position 14-19 (14-19) interacts with ATP; sequence SIGKGI. L-glutamine is bound at residue Tyr-54. Asp-71 lines the ATP pocket. Asp-71 and Glu-141 together coordinate Mg(2+). CTP is bound by residues 148–150, 188–193, and Lys-224; these read DIE and KTKPTQ. UTP-binding positions include 188–193 and Lys-224; that span reads KTKPTQ. The 241-residue stretch at 292–532 folds into the Glutamine amidotransferase type-1 domain; it reads RIGLVGKYVS…DFVGAALNNK (241 aa). Residue Gly-354 participates in L-glutamine binding. Cys-381 (nucleophile; for glutamine hydrolysis) is an active-site residue. Residues 382–385, Glu-405, and Arg-462 each bind L-glutamine; that span reads LGMQ. Residues His-507 and Glu-509 contribute to the active site.

Belongs to the CTP synthase family. In terms of assembly, homotetramer.

The catalysed reaction is UTP + L-glutamine + ATP + H2O = CTP + L-glutamate + ADP + phosphate + 2 H(+). It catalyses the reaction L-glutamine + H2O = L-glutamate + NH4(+). The enzyme catalyses UTP + NH4(+) + ATP = CTP + ADP + phosphate + 2 H(+). It functions in the pathway pyrimidine metabolism; CTP biosynthesis via de novo pathway; CTP from UDP: step 2/2. Allosterically activated by GTP, when glutamine is the substrate; GTP has no effect on the reaction when ammonia is the substrate. The allosteric effector GTP functions by stabilizing the protein conformation that binds the tetrahedral intermediate(s) formed during glutamine hydrolysis. Inhibited by the product CTP, via allosteric rather than competitive inhibition. In terms of biological role, catalyzes the ATP-dependent amination of UTP to CTP with either L-glutamine or ammonia as the source of nitrogen. Regulates intracellular CTP levels through interactions with the four ribonucleotide triphosphates. This Listeria monocytogenes serotype 4b (strain F2365) protein is CTP synthase.